The chain runs to 228 residues: MKAILLLSGGMDSLVTTAIAQQAGFELAAMHVNYGQRTMQRELNSFRAICSHYSIQQRLEINADFLGKIGGSSLTDLSMPVSVANLESHAIPASYVPFRNAGFLSMAVSWAEVIGAERIFIGAVEEDSSGYPDCRKIFYEAFNRVIELGTKPETHIEVVTPLIALKKWEIVRKGIELHAPFAFSWSCYKNEGQACGVCDSCALRLRAFEQAGMEDPIDYETRPHYIDC.

7–17 (LSGGMDSLVTT) serves as a coordination point for ATP. Residues C187, C195, C198, and C201 each contribute to the Zn(2+) site.

This sequence belongs to the QueC family. Requires Zn(2+) as cofactor.

It catalyses the reaction 7-carboxy-7-deazaguanine + NH4(+) + ATP = 7-cyano-7-deazaguanine + ADP + phosphate + H2O + H(+). It participates in purine metabolism; 7-cyano-7-deazaguanine biosynthesis. Catalyzes the ATP-dependent conversion of 7-carboxy-7-deazaguanine (CDG) to 7-cyano-7-deazaguanine (preQ(0)). The protein is 7-cyano-7-deazaguanine synthase of Chlorobium chlorochromatii (strain CaD3).